The chain runs to 415 residues: Transcriptional regulator fogI (415 aa).

The zn(2)-C6 fungal-type DNA-binding region spans 12–39 (CNACNESKVRCSQTKPTCARCERNKTTC). The tract at residues 50-153 (DAPPISLSHS…ILSPANLDLP (104 aa)) is disordered. Low complexity-rich tracts occupy residues 80–102 (VHIP…STTT) and 123–135 (QFFA…HQQP).

It is found in the nucleus. Its function is as follows. Transcriptional regulator that postively regulates the expression of the gene cluster that mediates the biosynthesis of flavoglaucin and congeners (including aspergin, dihydroauroglaucin and auroglaucin), prenylated salicylaldehyde derivatives carrying a saturated or an unsaturated C-7 side chain. This Aspergillus ruber (strain CBS 135680) protein is Transcriptional regulator fogI.